The following is a 423-amino-acid chain: UPF0597 protein Emin_0811 (423 aa).

The protein belongs to the UPF0597 family.

The chain is UPF0597 protein Emin_0811 from Elusimicrobium minutum (strain Pei191).